Reading from the N-terminus, the 249-residue chain is DNA repair protein RecO (249 aa).

The protein belongs to the RecO family.

In terms of biological role, involved in DNA repair and RecF pathway recombination. This Lactobacillus delbrueckii subsp. bulgaricus (strain ATCC BAA-365 / Lb-18) protein is DNA repair protein RecO.